Here is a 351-residue protein sequence, read N- to C-terminus: DNA polymerase IV (351 aa).

Residues 4-185 enclose the UmuC domain; it reads IIHVDMDCFF…LPLAKIPGVG (182 aa). Mg(2+) contacts are provided by D8 and D103. Residue E104 is part of the active site.

Belongs to the DNA polymerase type-Y family. In terms of assembly, monomer. The cofactor is Mg(2+).

It localises to the cytoplasm. The catalysed reaction is DNA(n) + a 2'-deoxyribonucleoside 5'-triphosphate = DNA(n+1) + diphosphate. Poorly processive, error-prone DNA polymerase involved in untargeted mutagenesis. Copies undamaged DNA at stalled replication forks, which arise in vivo from mismatched or misaligned primer ends. These misaligned primers can be extended by PolIV. Exhibits no 3'-5' exonuclease (proofreading) activity. May be involved in translesional synthesis, in conjunction with the beta clamp from PolIII. This is DNA polymerase IV from Escherichia coli (strain ATCC 8739 / DSM 1576 / NBRC 3972 / NCIMB 8545 / WDCM 00012 / Crooks).